The following is a 137-amino-acid chain: Small ribosomal subunit protein uS9c (137 aa).

Belongs to the universal ribosomal protein uS9 family.

Its subcellular location is the plastid. It is found in the chloroplast. In Chlorella vulgaris (Green alga), this protein is Small ribosomal subunit protein uS9c (rps9).